A 287-amino-acid polypeptide reads, in one-letter code: IQ domain-containing protein K (287 aa).

This is IQ domain-containing protein K (IQCK) from Homo sapiens (Human).